The primary structure comprises 297 residues: Bifunctional protein FolD (297 aa).

Residues 168–170 (GRS), Thr197, and Val238 contribute to the NADP(+) site.

Belongs to the tetrahydrofolate dehydrogenase/cyclohydrolase family. Homodimer.

It catalyses the reaction (6R)-5,10-methylene-5,6,7,8-tetrahydrofolate + NADP(+) = (6R)-5,10-methenyltetrahydrofolate + NADPH. The catalysed reaction is (6R)-5,10-methenyltetrahydrofolate + H2O = (6R)-10-formyltetrahydrofolate + H(+). It functions in the pathway one-carbon metabolism; tetrahydrofolate interconversion. Catalyzes the oxidation of 5,10-methylenetetrahydrofolate to 5,10-methenyltetrahydrofolate and then the hydrolysis of 5,10-methenyltetrahydrofolate to 10-formyltetrahydrofolate. This chain is Bifunctional protein FolD, found in Lawsonia intracellularis (strain PHE/MN1-00).